Consider the following 463-residue polypeptide: L-seryl-tRNA(Sec) selenium transferase (463 aa).

At lysine 295 the chain carries N6-(pyridoxal phosphate)lysine.

The protein belongs to the SelA family. Homodecamer; pentamer of dimers. Binds only one seryl-tRNA(Sec) per dimer. Requires pyridoxal 5'-phosphate as cofactor.

It localises to the cytoplasm. It carries out the reaction L-seryl-tRNA(Sec) + selenophosphate + H(+) = L-selenocysteinyl-tRNA(Sec) + phosphate. Its pathway is aminoacyl-tRNA biosynthesis; selenocysteinyl-tRNA(Sec) biosynthesis; selenocysteinyl-tRNA(Sec) from L-seryl-tRNA(Sec) (bacterial route): step 1/1. In terms of biological role, converts seryl-tRNA(Sec) to selenocysteinyl-tRNA(Sec) required for selenoprotein biosynthesis. This is L-seryl-tRNA(Sec) selenium transferase from Salmonella paratyphi B (strain ATCC BAA-1250 / SPB7).